The chain runs to 588 residues: Probable fumarate reductase Ifc3 (588 aa).

The first 22 residues, 1 to 22 (MKLKYLVSAMALVVLSSGTAMA), serve as a signal peptide directing secretion. Positions 31, 37, 40, 41, 58, 61, 62, 78, 81, 87, 90, 91, 93, 94, 101, 104, and 105 each coordinate heme c. A flavoprotein-like region spans residues 135 to 588 (AIAAGPSETT…DNAAKHALDK (454 aa)). Residues alanine 154, aspartate 173, asparagine 181, serine 182, glycine 187, and glycine 188 each coordinate FAD. Glycine 187 is a fumarate binding site. Glycine 187 lines the succinate pocket. Arginine 218 is a heme c binding site. FAD contacts are provided by valine 295 and aspartate 361. Histidine 382, serine 394, and glutamate 395 together coordinate succinate. Fumarate contacts are provided by serine 394 and glutamate 395. The active-site Proton donor is the arginine 419. Residue histidine 521 coordinates fumarate. Histidine 521 contacts succinate. Residue glutamate 551 participates in FAD binding. Fumarate contacts are provided by arginine 561 and glycine 564. Positions 561 and 564 each coordinate succinate. Glycine 564, alanine 566, and isoleucine 567 together coordinate FAD.

In terms of assembly, homodimer. The cofactor is FAD. Heme c is required as a cofactor.

The protein localises to the periplasm. In terms of biological role, flavocytochrome that catalyzes the reduction of fumarate to succinate in vitro. Is essentially unidirectional, catalyzing only fumarate reduction. In vitro, can use the artificial electron donor methyl viologen. May be involved in an alternative route for electron transport to Fe(3+). This Shewanella frigidimarina (strain NCIMB 400) protein is Probable fumarate reductase Ifc3.